The following is a 121-amino-acid chain: Small ribosomal subunit protein uS13 (121 aa).

A disordered region spans residues 93–121 (RGLPMRGQRTRTNARTRKGPRKAAQSLKK).

It belongs to the universal ribosomal protein uS13 family. In terms of assembly, part of the 30S ribosomal subunit. Forms a loose heterodimer with protein S19. Forms two bridges to the 50S subunit in the 70S ribosome.

Functionally, located at the top of the head of the 30S subunit, it contacts several helices of the 16S rRNA. In the 70S ribosome it contacts the 23S rRNA (bridge B1a) and protein L5 of the 50S subunit (bridge B1b), connecting the 2 subunits; these bridges are implicated in subunit movement. Contacts the tRNAs in the A and P-sites. The polypeptide is Small ribosomal subunit protein uS13 (Variovorax paradoxus (strain S110)).